We begin with the raw amino-acid sequence, 548 residues long: Chaperonin GroEL (548 aa).

ATP contacts are provided by residues threonine 29 to proline 32, lysine 50, aspartate 86 to threonine 90, glycine 414, and aspartate 493.

Belongs to the chaperonin (HSP60) family. In terms of assembly, forms a cylinder of 14 subunits composed of two heptameric rings stacked back-to-back. Interacts with the co-chaperonin GroES.

The protein localises to the cytoplasm. It carries out the reaction ATP + H2O + a folded polypeptide = ADP + phosphate + an unfolded polypeptide.. Its function is as follows. Together with its co-chaperonin GroES, plays an essential role in assisting protein folding. The GroEL-GroES system forms a nano-cage that allows encapsulation of the non-native substrate proteins and provides a physical environment optimized to promote and accelerate protein folding. The protein is Chaperonin GroEL of Desulfatibacillum aliphaticivorans.